We begin with the raw amino-acid sequence, 256 residues long: Pimeloyl-[acyl-carrier protein] methyl ester esterase (256 aa).

Residues 15-242 form the AB hydrolase-1 domain; that stretch reads HLVLLHGWGL…AAHAPFISHP (228 aa). Residues Trp22, 82–83, and 143–147 each bind substrate; these read SL and FLALQ. Ser82 (nucleophile) is an active-site residue. Catalysis depends on residues Asp207 and His235. His235 contributes to the substrate binding site.

Belongs to the AB hydrolase superfamily. Carboxylesterase BioH family. Monomer.

The protein localises to the cytoplasm. The catalysed reaction is 6-carboxyhexanoyl-[ACP] methyl ester + H2O = 6-carboxyhexanoyl-[ACP] + methanol + H(+). Its pathway is cofactor biosynthesis; biotin biosynthesis. The physiological role of BioH is to remove the methyl group introduced by BioC when the pimeloyl moiety is complete. It allows to synthesize pimeloyl-ACP via the fatty acid synthetic pathway through the hydrolysis of the ester bonds of pimeloyl-ACP esters. This Escherichia coli O17:K52:H18 (strain UMN026 / ExPEC) protein is Pimeloyl-[acyl-carrier protein] methyl ester esterase.